Consider the following 106-residue polypeptide: Immunoglobulin lambda constant 1 (106 aa).

The Ig-like domain maps to 7-101; that stretch reads PTVTLFPPSS…EGSTVEKTVA (95 aa). Cysteine 28 and cysteine 87 are joined by a disulfide.

As to quaternary structure, immunoglobulins are composed of two identical heavy chains and two identical light chains; disulfide-linked.

It is found in the secreted. It localises to the cell membrane. Functionally, constant region of immunoglobulin light chains. Immunoglobulins, also known as antibodies, are membrane-bound or secreted glycoproteins produced by B lymphocytes. In the recognition phase of humoral immunity, the membrane-bound immunoglobulins serve as receptors which, upon binding of a specific antigen, trigger the clonal expansion and differentiation of B lymphocytes into immunoglobulins-secreting plasma cells. Secreted immunoglobulins mediate the effector phase of humoral immunity, which results in the elimination of bound antigens. The antigen binding site is formed by the variable domain of one heavy chain, together with that of its associated light chain. Thus, each immunoglobulin has two antigen binding sites with remarkable affinity for a particular antigen. The variable domains are assembled by a process called V-(D)-J rearrangement and can then be subjected to somatic hypermutations which, after exposure to antigen and selection, allow affinity maturation for a particular antigen. This chain is Immunoglobulin lambda constant 1, found in Homo sapiens (Human).